The sequence spans 418 residues: Tyrosine--tRNA ligase (418 aa).

L-tyrosine is bound at residue Y39. The 'HIGH' region motif lies at 44-53; that stretch reads CTAASLHVGH. L-tyrosine contacts are provided by Y176 and Q180. The short motif at 236–240 is the 'KMSKS' region element; sequence KMGKT. Residue K239 coordinates ATP. The S4 RNA-binding domain occupies 350 to 418; that stretch reads IGVLVAFAEK…KKKHVLLRLA (69 aa).

Belongs to the class-I aminoacyl-tRNA synthetase family. TyrS type 1 subfamily. Homodimer.

Its subcellular location is the cytoplasm. It carries out the reaction tRNA(Tyr) + L-tyrosine + ATP = L-tyrosyl-tRNA(Tyr) + AMP + diphosphate + H(+). Its function is as follows. Catalyzes the attachment of tyrosine to tRNA(Tyr) in a two-step reaction: tyrosine is first activated by ATP to form Tyr-AMP and then transferred to the acceptor end of tRNA(Tyr). This is Tyrosine--tRNA ligase from Rhodopseudomonas palustris (strain ATCC BAA-98 / CGA009).